Here is a 388-residue protein sequence, read N- to C-terminus: MDKLDANVSSKEGFGSVEKVVLLTFLSAVILMAILGNLLVMVAVCRDRQLRKIKTNYFIVSLAFADLLVSVLVMPFGAIELVQDIWVYGEMFCLVRTSLDVLLTTASIFHLCCISLDRYYAICCQPLVYRNKMTPLRIALMLGGCWVIPMFISFLPIMQGWNNIGIVDLIEKRKFNQNSNSTYCVFMVNKPYAITCSVVAFYIPFLLMVLAYYRIYVTAKEHARQIQVLQRAGAPAEGRPQPADQHSTHRMRTETKAAKTLCIIMGCFCLCWAPFFVTNIVDPFIDYTVPGQLWTAFLWLGYINSGLNPFLYAFLNKSFRRAFLIILCCDDERYRRPSILGQTVPCSTTTINGSTHVLRDTVECGGQWESQCHPAASSPLVAAQPIDT.

The Extracellular segment spans residues 1 to 19 (MDKLDANVSSKEGFGSVEK). N-linked (GlcNAc...) asparagine glycosylation occurs at N7. A helical transmembrane segment spans residues 20–44 (VVLLTFLSAVILMAILGNLLVMVAV). Residues 45–54 (CRDRQLRKIK) lie on the Cytoplasmic side of the membrane. Residues 55 to 78 (TNYFIVSLAFADLLVSVLVMPFGA) form a helical membrane-spanning segment. The Extracellular segment spans residues 79–92 (IELVQDIWVYGEMF). A helical transmembrane segment spans residues 93 to 117 (CLVRTSLDVLLTTASIFHLCCISLD). C93 and C184 are oxidised to a cystine. A serotonin-binding site is contributed by D100. Topologically, residues 118-133 (RYYAICCQPLVYRNKM) are cytoplasmic. A helical transmembrane segment spans residues 134–157 (TPLRIALMLGGCWVIPMFISFLPI). Residues 158-188 (MQGWNNIGIVDLIEKRKFNQNSNSTYCVFMV) lie on the Extracellular side of the membrane. Residues 189-212 (NKPYAITCSVVAFYIPFLLMVLAY) traverse the membrane as a helical segment. Topologically, residues 213 to 257 (YRIYVTAKEHARQIQVLQRAGAPAEGRPQPADQHSTHRMRTETKA) are cytoplasmic. A helical transmembrane segment spans residues 258–283 (AKTLCIIMGCFCLCWAPFFVTNIVDP). N279 is a serotonin binding site. At 284 to 290 (FIDYTVP) the chain is on the extracellular side. A helical transmembrane segment spans residues 291-314 (GQLWTAFLWLGYINSGLNPFLYAF). Over 315-388 (LNKSFRRAFL…PLVAAQPIDT (74 aa)) the chain is Cytoplasmic.

This sequence belongs to the G-protein coupled receptor 1 family. Interacts (via C-terminus 330-346 AA) with GRK5; this interaction is promoted by 5-HT (serotonin).

The protein localises to the cell membrane. Its subcellular location is the endosome membrane. G-protein coupled receptor for 5-hydroxytryptamine (serotonin), a biogenic hormone that functions as a neurotransmitter, a hormone and a mitogen. Ligand binding causes a conformation change that triggers signaling via guanine nucleotide-binding proteins (G proteins) and modulates the activity of downstream effectors. HTR4 is coupled to G(s) G alpha proteins and mediates activation of adenylate cyclase activity. In Cavia porcellus (Guinea pig), this protein is 5-hydroxytryptamine receptor 4 (HTR4).